Here is a 289-residue protein sequence, read N- to C-terminus: 4-diphosphocytidyl-2-C-methyl-D-erythritol kinase (289 aa).

Lys10 is a catalytic residue. 94–104 (PVAAGLAGGSS) contacts ATP. Residue Asp136 is part of the active site.

The protein belongs to the GHMP kinase family. IspE subfamily.

The catalysed reaction is 4-CDP-2-C-methyl-D-erythritol + ATP = 4-CDP-2-C-methyl-D-erythritol 2-phosphate + ADP + H(+). Its pathway is isoprenoid biosynthesis; isopentenyl diphosphate biosynthesis via DXP pathway; isopentenyl diphosphate from 1-deoxy-D-xylulose 5-phosphate: step 3/6. Functionally, catalyzes the phosphorylation of the position 2 hydroxy group of 4-diphosphocytidyl-2C-methyl-D-erythritol. The sequence is that of 4-diphosphocytidyl-2-C-methyl-D-erythritol kinase from Bacillus cytotoxicus (strain DSM 22905 / CIP 110041 / 391-98 / NVH 391-98).